The chain runs to 445 residues: Exodeoxyribonuclease 7 large subunit (445 aa).

It belongs to the XseA family. Heterooligomer composed of large and small subunits.

The protein resides in the cytoplasm. It carries out the reaction Exonucleolytic cleavage in either 5'- to 3'- or 3'- to 5'-direction to yield nucleoside 5'-phosphates.. In terms of biological role, bidirectionally degrades single-stranded DNA into large acid-insoluble oligonucleotides, which are then degraded further into small acid-soluble oligonucleotides. The sequence is that of Exodeoxyribonuclease 7 large subunit from Pasteurella multocida (strain Pm70).